The sequence spans 83 residues: Small ribosomal subunit protein uS17 (83 aa).

The protein belongs to the universal ribosomal protein uS17 family. In terms of assembly, part of the 30S ribosomal subunit.

Its function is as follows. One of the primary rRNA binding proteins, it binds specifically to the 5'-end of 16S ribosomal RNA. In Campylobacter hominis (strain ATCC BAA-381 / DSM 21671 / CCUG 45161 / LMG 19568 / NCTC 13146 / CH001A), this protein is Small ribosomal subunit protein uS17.